A 208-amino-acid chain; its full sequence is Dual specificity protein phosphatase 22-A (208 aa).

The Tyrosine-protein phosphatase domain occupies 4-144 (GMNKVIDGLY…LQEFQMKQVS (141 aa)). Catalysis depends on cysteine 88, which acts as the Phosphocysteine intermediate.

It belongs to the protein-tyrosine phosphatase family. Non-receptor class dual specificity subfamily.

It localises to the cytoplasm. The protein resides in the nucleus. It catalyses the reaction O-phospho-L-tyrosyl-[protein] + H2O = L-tyrosyl-[protein] + phosphate. The catalysed reaction is O-phospho-L-seryl-[protein] + H2O = L-seryl-[protein] + phosphate. The enzyme catalyses O-phospho-L-threonyl-[protein] + H2O = L-threonyl-[protein] + phosphate. Its function is as follows. Activates the Jnk signaling pathway. Dephosphorylates and deactivates p38 and stress-activated protein kinase/c-Jun N-terminal kinase (SAPK/JNK). In Danio rerio (Zebrafish), this protein is Dual specificity protein phosphatase 22-A.